Reading from the N-terminus, the 96-residue chain is Small ribosomal subunit protein bS6 (96 aa).

This sequence belongs to the bacterial ribosomal protein bS6 family.

Binds together with bS18 to 16S ribosomal RNA. The protein is Small ribosomal subunit protein bS6 of Mycolicibacterium paratuberculosis (strain ATCC BAA-968 / K-10) (Mycobacterium paratuberculosis).